A 305-amino-acid polypeptide reads, in one-letter code: Acetaldehyde dehydrogenase (305 aa).

NAD(+) is bound at residue 12-15 (SGNI). Residue cysteine 127 is the Acyl-thioester intermediate of the active site. NAD(+)-binding positions include 158–166 (SAGPGTRAN) and asparagine 277.

This sequence belongs to the acetaldehyde dehydrogenase family.

It catalyses the reaction acetaldehyde + NAD(+) + CoA = acetyl-CoA + NADH + H(+). The protein is Acetaldehyde dehydrogenase of Mycolicibacterium paratuberculosis (strain ATCC BAA-968 / K-10) (Mycobacterium paratuberculosis).